Consider the following 269-residue polypeptide: Imidazoleglycerol-phosphate dehydratase 3, chloroplastic (269 aa).

Residues 1 to 51 (MTTAPVVSPSLSRLHSAPASPFPKAPVGSGAGVAFPARPYGPSLRLRSAVM) constitute a chloroplast transit peptide. Substrate-binding positions include E83, 109–117 (HMLDQLASH), 135–139 (HHSNE), R161, and R183. Mn(2+) is bound by residues H109, H135, H136, and E139. 4 residues coordinate Mn(2+): H207, H231, H232, and E235. Residues 231 to 239 (HHIIEATFK) and 261 to 263 (SSK) each bind substrate.

The protein belongs to the imidazoleglycerol-phosphate dehydratase family. The cofactor is Mn(2+).

Its subcellular location is the plastid. It localises to the chloroplast. It catalyses the reaction D-erythro-1-(imidazol-4-yl)glycerol 3-phosphate = 3-(imidazol-4-yl)-2-oxopropyl phosphate + H2O. The protein operates within amino-acid biosynthesis; L-histidine biosynthesis; L-histidine from 5-phospho-alpha-D-ribose 1-diphosphate: step 6/9. This is Imidazoleglycerol-phosphate dehydratase 3, chloroplastic from Triticum aestivum (Wheat).